The chain runs to 1872 residues: Plexin-A3 (1872 aa).

An N-terminal signal peptide occupies residues methionine 1–glycine 19. The region spanning serine 20 to valine 489 is the Sema domain. Topologically, residues serine 20–proline 1220 are extracellular. The N-linked (GlcNAc...) asparagine glycan is linked to asparagine 60. 9 disulfides stabilise this stretch: cysteine 78–cysteine 87, cysteine 113–cysteine 121, cysteine 267–cysteine 388, cysteine 283–cysteine 339, cysteine 357–cysteine 376, cysteine 492–cysteine 509, cysteine 498–cysteine 540, cysteine 501–cysteine 518, and cysteine 512–cysteine 524. A glycan (N-linked (GlcNAc...) asparagine) is linked at asparagine 549. Cysteine 575 and cysteine 595 are joined by a disulfide. 4 consecutive IPT/TIG domains span residues proline 841–valine 934, proline 936–threonine 1021, proline 1024–tyrosine 1123, and proline 1126–threonine 1212. An N-linked (GlcNAc...) asparagine glycan is attached at asparagine 1163. Residues alanine 1221–valine 1241 form a helical membrane-spanning segment. The stretch at leucine 1240–glutamine 1294 forms a coiled coil. Residues alanine 1242–serine 1872 lie on the Cytoplasmic side of the membrane. Position 1597 is a phosphoserine (serine 1597).

Belongs to the plexin family. As to expression, detected in embryonic hindbrain, spinal cord, dorsal root ganglion, trigeminal ganglion and superior cervical ganglion. In newborns, detected throughout all layers of the hippocampus.

The protein localises to the cell membrane. Coreceptor for SEMA3A and SEMA3F. Necessary for signaling by class 3 semaphorins and subsequent remodeling of the cytoskeleton. Plays a role in axon guidance in the developing nervous system. Regulates the migration of sympathetic neurons, but not of neural crest precursors. Required for normal dendrite spine morphology in pyramidal neurons. May play a role in regulating semaphorin-mediated programmed cell death in the developing nervous system. Class 3 semaphorins bind to a complex composed of a neuropilin and a plexin. The plexin modulates the affinity of the complex for specific semaphorins, and its cytoplasmic domain is required for the activation of down-stream signaling events in the cytoplasm. This Mus musculus (Mouse) protein is Plexin-A3 (Plxna3).